A 288-amino-acid polypeptide reads, in one-letter code: ATP phosphoribosyltransferase (288 aa).

This sequence belongs to the ATP phosphoribosyltransferase family. Long subfamily. Requires Mg(2+) as cofactor.

The protein resides in the cytoplasm. It carries out the reaction 1-(5-phospho-beta-D-ribosyl)-ATP + diphosphate = 5-phospho-alpha-D-ribose 1-diphosphate + ATP. It participates in amino-acid biosynthesis; L-histidine biosynthesis; L-histidine from 5-phospho-alpha-D-ribose 1-diphosphate: step 1/9. Feedback inhibited by histidine. Functionally, catalyzes the condensation of ATP and 5-phosphoribose 1-diphosphate to form N'-(5'-phosphoribosyl)-ATP (PR-ATP). Has a crucial role in the pathway because the rate of histidine biosynthesis seems to be controlled primarily by regulation of HisG enzymatic activity. The polypeptide is ATP phosphoribosyltransferase (hisG) (Methanocaldococcus jannaschii (strain ATCC 43067 / DSM 2661 / JAL-1 / JCM 10045 / NBRC 100440) (Methanococcus jannaschii)).